A 1673-amino-acid chain; its full sequence is AF4/FMR2 family member lilli (1673 aa).

Disordered regions lie at residues 1–24 (MAQQQQQQMQQQQQHHTSSINNNN), 54–80 (YSQNYNMEEYERRKRREREKIERQQGI), 125–302 (SRSA…PPEK), 407–534 (QLPP…GAQN), 575–604 (VGTGSGSGGTLSSGGSSSNKTPSPTESNKW), 722–1086 (RLSD…INTL), 1114–1133 (QGKLDAAAQPSAPQAPPAAP), 1141–1160 (RMTPTQQQQLGAGLASPART), and 1187–1315 (KLTP…MGKE). Residues 71–80 (REKIERQQGI) are compositionally biased toward basic and acidic residues. Low complexity-rich tracts occupy residues 146-180 (SLGHSPSSASSAAGPTAASATTSLPGQQQHYQQQQ) and 223-244 (PRTSSSNSNSSSVTNNASSGGV). Position 420 is a phosphothreonine (Thr420). Over residues 428–441 (LKTEKNHSLEKQDS) the composition is skewed to basic and acidic residues. A compositionally biased stretch (acidic residues) spans 443–454 (LENDLELSESED). 2 positions are modified to phosphoserine: Ser450 and Ser452. Residues 465-486 (GNSSNSSESDSSESGSESSSKN) are compositionally biased toward low complexity. The span at 491-500 (HPNHQQHHHQ) shows a compositional bias: basic residues. The span at 501-525 (LQQQQQQQQATMQQQQVLQQQHRSQ) shows a compositional bias: low complexity. Positions 577 to 586 (TGSGSGGTLS) are enriched in gly residues. Polar residues predominate over residues 594–604 (KTPSPTESNKW). Over residues 724–757 (SDSGTSASGSSSSSSSSSDSAMGGEVVPMPGPGE) the composition is skewed to low complexity. Polar residues predominate over residues 775 to 788 (QPTQSQKAPPSNSV). Residues 802 to 812 (QRQKKPRKKKA) show a composition bias toward basic residues. 2 positions are modified to phosphoserine: Ser821 and Ser822. Residues 851–863 (KKGRGRPRKQQQS) constitute a DNA-binding region (a.T hook). Residues 860 to 898 (QQQSGGSGNLSSASAGSSSQTKGPTLTAAKKPLAKTPLA) are compositionally biased toward low complexity. Phosphoserine occurs at positions 871 and 873. Residues 909 to 919 (SQSSSNGNTPT) show a composition bias toward polar residues. 2 stretches are compositionally biased toward low complexity: residues 949 to 965 (SSSAESSSKSSSSSSSS) and 993 to 1004 (GSGSSSPSSSGS). Positions 1011–1022 (TRSQVGSGQALA) are enriched in polar residues. Low complexity predominate over residues 1034–1060 (SQHSQHLSSSDCSSSSGGCTAVCSSSS). Basic and acidic residues predominate over residues 1065 to 1082 (EGRREKERERKPKSDKNK). Positions 1190-1205 (PAQQNGHLTPKDQATN) are enriched in polar residues. 2 stretches are compositionally biased toward basic and acidic residues: residues 1226-1243 (EHPVKPEPELDAGYEAKF) and 1252-1282 (FQLKQERDRDRERERERERERERDREREQPP). A Phosphoserine modification is found at Ser1362. Position 1364 is a phosphothreonine (Thr1364). Residues 1564-1583 (NTPSSISPSNSVGSQGSGSN) show a composition bias toward low complexity. The disordered stretch occupies residues 1564–1588 (NTPSSISPSNSVGSQGSGSNTPPGR).

The protein belongs to the AF4 family. As to quaternary structure, component of the super elongation complex (SEC), at least composed of Ell, Cdk9, cyclin-T (CycT), lilli and ear.

The protein resides in the nucleus. In terms of biological role, has a role in transcriptional regulation. Acts in parallel with the Ras/MAPK and the PI3K/PKB pathways in the control of cell identity and cellular growth. Essential for regulation of the cytoskeleton and cell growth but not for cell proliferation or growth rate. Required specifically for the microtubule-based basal transport of lipid droplets. Plays a partially redundant function downstream of Raf in cell fate specification in the developing eye. Pair-rule protein that regulates embryonic cellularization, gastrulation and segmentation. The sequence is that of AF4/FMR2 family member lilli from Drosophila melanogaster (Fruit fly).